Reading from the N-terminus, the 528-residue chain is Cytochrome P450 monooxygenase ppsD (528 aa).

The helical transmembrane segment at Leu2–Leu21 threads the bilayer. Asn137 carries an N-linked (GlcNAc...) asparagine glycan. Cys441 serves as a coordination point for heme. N-linked (GlcNAc...) asparagine glycans are attached at residues Asn450 and Asn463.

The protein belongs to the cytochrome P450 family. It depends on heme as a cofactor.

It is found in the membrane. Cytochrome P450 monooxygenase; part of the gene cluster that mediates the biosynthesis of 2,4'-dihydroxy-3'-methoxypropiophenone. The first step of the pathway is the conversion of acetate into acetyl-CoA by the acyl-CoA ligase ppsA. Acetyl-CoA is then used as a starter unit by the polyketide synthase ppsB and condensed with 4 malonyl-CoA unit to produce the pentaketide backbone. During polyketide extension, the polykedite chain is probably reduced and dehydrated by the KR and PT domains, respectively. O-methylation seems to be catalyzed by an unknown methyltransferase rather than by the CMeT domain of ppsB. Two hydroxylations and one further decarboxylation step catalyzed by yet unknown enzymes are then required to yield 4'-hydroxy-3'-methoxypropiophenone. PpsC functions as a carrier protein to transport 4'-hydroxy-3'-methoxypropiophenone to a specific cell compartment in which 4'-hydroxy-3'-methoxypropiophenone is hydroxylated to 2,4'-dihydroxy-3'-methoxypropiophenone by a still to be identified enzyme. This Aspergillus oryzae (strain ATCC 42149 / RIB 40) (Yellow koji mold) protein is Cytochrome P450 monooxygenase ppsD.